A 192-amino-acid chain; its full sequence is Signal peptidase complex catalytic subunit SEC11C (192 aa).

Residues 1–28 (MVRAGAVGTHLPTSSLDIFGDLRKMNKR) are Cytoplasmic-facing. Residues 29–48 (QLYYQVLNFAMIVSSALMIW) form a helical; Signal-anchor for type II membrane protein membrane-spanning segment. The Lumenal segment spans residues 49 to 192 (KGLIVLTGSE…GAYVLLKRES (144 aa)). Active-site charge relay system residues include Ser-68, His-108, and Asp-134. A C-terminal short (CTS) helix region spans residues 177-188 (ALLAVMGAYVLL).

It belongs to the peptidase S26B family. As to quaternary structure, component of the signal peptidase complex paralog C (SPC-C) composed of a catalytic subunit SEC11C and three accessory subunits SPCS1, SPCS2 and SPCS3. Within the complex, interacts with SPCS2 and SPCS3. The complex induces a local thinning of the ER membrane which is used to measure the length of the signal peptide (SP) h-region of protein substrates. This ensures the selectivity of the complex towards h-regions shorter than 18-20 amino acids. In terms of processing, may undergo processing at the N-terminus.

It localises to the endoplasmic reticulum membrane. It catalyses the reaction Cleavage of hydrophobic, N-terminal signal or leader sequences from secreted and periplasmic proteins.. Functionally, catalytic component of the signal peptidase complex (SPC) which catalyzes the cleavage of N-terminal signal sequences from nascent proteins as they are translocated into the lumen of the endoplasmic reticulum. Specifically cleaves N-terminal signal peptides that contain a hydrophobic alpha-helix (h-region) shorter than 18-20 amino acids. In Mus musculus (Mouse), this protein is Signal peptidase complex catalytic subunit SEC11C (Sec11c).